Consider the following 132-residue polypeptide: Small ribosomal subunit protein uS8 (132 aa).

The protein belongs to the universal ribosomal protein uS8 family. Part of the 30S ribosomal subunit. Contacts proteins S5 and S12.

Its function is as follows. One of the primary rRNA binding proteins, it binds directly to 16S rRNA central domain where it helps coordinate assembly of the platform of the 30S subunit. In Xanthobacter autotrophicus (strain ATCC BAA-1158 / Py2), this protein is Small ribosomal subunit protein uS8.